The sequence spans 426 residues: Cytochrome c biogenesis protein CcsB (426 aa).

The next 3 helical transmembrane spans lie at Leu-14–Ile-34, Ser-72–Arg-92, and Leu-162–Ser-182.

Belongs to the Ccs1/CcsB family. May interact with CcsA.

The protein resides in the cellular thylakoid membrane. Its function is as follows. Required during biogenesis of c-type cytochromes (cytochrome c6 and cytochrome f) at the step of heme attachment. This chain is Cytochrome c biogenesis protein CcsB, found in Prochlorococcus marinus (strain NATL2A).